Here is a 440-residue protein sequence, read N- to C-terminus: GTPase Der (440 aa).

EngA-type G domains follow at residues 3-167 (PIIA…PYDR) and 176-351 (TRIA…EQYC). GTP is bound by residues 9–16 (GRPNVGKS), 56–60 (DTGGF), 119–122 (NKVD), 182–189 (GRPNVGKS), 229–233 (DTAGI), and 294–297 (NKWD). Positions 352–436 (KRVTTGELNR…PLKLIFRGRD (85 aa)) constitute a KH-like domain.

The protein belongs to the TRAFAC class TrmE-Era-EngA-EngB-Septin-like GTPase superfamily. EngA (Der) GTPase family. As to quaternary structure, associates with the 50S ribosomal subunit.

Its function is as follows. GTPase that plays an essential role in the late steps of ribosome biogenesis. The polypeptide is GTPase Der (Geobacter sp. (strain M21)).